The primary structure comprises 96 residues: Co-chaperonin GroES (96 aa).

This sequence belongs to the GroES chaperonin family. In terms of assembly, heptamer of 7 subunits arranged in a ring. Interacts with the chaperonin GroEL.

Its subcellular location is the cytoplasm. Together with the chaperonin GroEL, plays an essential role in assisting protein folding. The GroEL-GroES system forms a nano-cage that allows encapsulation of the non-native substrate proteins and provides a physical environment optimized to promote and accelerate protein folding. GroES binds to the apical surface of the GroEL ring, thereby capping the opening of the GroEL channel. The chain is Co-chaperonin GroES from Nitrosospira multiformis (strain ATCC 25196 / NCIMB 11849 / C 71).